A 336-amino-acid polypeptide reads, in one-letter code: Structure-specific endonuclease subunit SLX1 (336 aa).

A GIY-YIG domain is found at 21-104 (SFYGVYLLQS…QHCHETRHIK (84 aa)). The disordered stretch occupies residues 37–57 (FYIGSTPDPPRRLRQHNGDLK). An SLX1-type zinc finger spans residues 214-290 (CALCLEPIEQ…PATVNRCCSC (77 aa)).

This sequence belongs to the SLX1 family. Forms a heterodimer with SLX4. A divalent metal cation serves as cofactor.

The protein localises to the nucleus. Its function is as follows. Catalytic subunit of the SLX1-SLX4 structure-specific endonuclease that resolves DNA secondary structures generated during DNA repair and recombination. Has endonuclease activity towards branched DNA substrates, introducing single-strand cuts in duplex DNA close to junctions with ss-DNA. This chain is Structure-specific endonuclease subunit SLX1, found in Scheffersomyces stipitis (strain ATCC 58785 / CBS 6054 / NBRC 10063 / NRRL Y-11545) (Yeast).